A 221-amino-acid polypeptide reads, in one-letter code: Ribosomal RNA small subunit methyltransferase Nep1 (221 aa).

Residues glycine 174, glycine 179, and 196 to 201 contribute to the S-adenosyl-L-methionine site; that span reads IGDETM.

Belongs to the class IV-like SAM-binding methyltransferase superfamily. RNA methyltransferase NEP1 family. In terms of assembly, homodimer.

The catalysed reaction is a pseudouridine in rRNA + S-adenosyl-L-methionine = an N(1)-methylpseudouridine in rRNA + S-adenosyl-L-homocysteine + H(+). In terms of biological role, methyltransferase involved in ribosomal biogenesis. Specifically catalyzes the N1-methylation of the pseudouridine corresponding to position 914 in M.jannaschii 16S rRNA. The protein is Ribosomal RNA small subunit methyltransferase Nep1 of Pyrobaculum islandicum (strain DSM 4184 / JCM 9189 / GEO3).